The following is a 257-amino-acid chain: ATP synthase subunit a (257 aa).

6 consecutive transmembrane segments (helical) span residues 34–54, 93–113, 122–142, 149–169, 187–207, and 210–230; these read ITNIGLYMTIAAFIAFYFSIL, YFPFMYTLFIFILINNLIGMV, HFILTFSLSFTVVLGATVLGF, FFSLFVPAGCPLGLLPLLVLI, ANILSGHMLLNILSGFTYNIM, and GIIFFILGLLPLAFIIAFSGL.

This sequence belongs to the ATPase A chain family. As to quaternary structure, F-type ATPases have 2 components, CF(1) - the catalytic core - and CF(0) - the membrane proton channel. CF(1) has five subunits: alpha(3), beta(3), gamma(1), delta(1), epsilon(1). CF(0) has three main subunits: a, b and c.

It localises to the mitochondrion inner membrane. Its function is as follows. Mitochondrial membrane ATP synthase (F(1)F(0) ATP synthase or Complex V) produces ATP from ADP in the presence of a proton gradient across the membrane which is generated by electron transport complexes of the respiratory chain. F-type ATPases consist of two structural domains, F(1) - containing the extramembraneous catalytic core and F(0) - containing the membrane proton channel, linked together by a central stalk and a peripheral stalk. During catalysis, ATP synthesis in the catalytic domain of F(1) is coupled via a rotary mechanism of the central stalk subunits to proton translocation. Key component of the proton channel; it may play a direct role in the translocation of protons across the membrane. The protein is ATP synthase subunit a (ATP6) of Cochliobolus heterostrophus (Southern corn leaf blight fungus).